Here is a 419-residue protein sequence, read N- to C-terminus: Haloacid dehalogenase-like hydrolase domain-containing 5 (419 aa).

An N-terminal signal peptide occupies residues 1 to 15 (MAALAGLGVLGAGRH).

Belongs to the HAD-like hydrolase superfamily.

The protein is Haloacid dehalogenase-like hydrolase domain-containing 5 of Mus musculus (Mouse).